Reading from the N-terminus, the 705-residue chain is MTTNSRPSALQAPGLQIFSMLKSSEEDGFMSSSLTLDSDNIIGVTENNRQEFYSTWRKPSLLSSRSVLHEYSPTIVGSNDCTFSPITVGKTTKFFNWDDIISRIFMQQPFGVTHQFFEEFRYSIITSHFLNDMNHYRLSLHLDQSIMNFHKSSTLLKNVPPKSVPFMATKYGKLAVAEDKKLYFRQNFNYLSMIITSYRVLTQLKKYCRKKNSPGLKRVVILILVAVYLSIQQEYFRRHLICYKTLLKVRKVLESLQQVDVMIHKYHLRFKEIKNHSFISRVSLISIADEHSSVIKELLVFSSDALFYKLKSIIPDIVIFSDTSELSKYCELYGIDVPNLYYNNTTTVKDLDGKLYRLKLLKKFMLCCLLSLDMTGNENLSNVNMRNALNKIFPDYMARVQLKKKYNPIGTFQNIVSLLRGLHSLLSTVLVSLNDHKQILYAFPEETSTNTGCERANVCSFSKNDKLFQALNYLKMIENNLLAIDIRNGITENDRNIIEDKLEELITFWKTSKICGNISRIQKVSPTNTINHGFHLDILKGRKSPRSSSVQGLSLERKVDFIDVAESVNDSFENDTELEEYEDYDCQEECSAGSRQNHRVDFIGKDSCRKPDFKQLSDNELRRKLDERILKLAQENREGRERLRTAKSFELLRKAQASMSVKFGFQKPLRDDAFLESRPLSKCKVSSEETIPFLYELKGLLGNDS.

The helical transmembrane segment at 215–231 (GLKRVVILILVAVYLSI) threads the bilayer. N-linked (GlcNAc...) asparagine glycans are attached at residues Asn275, Asn343, Asn344, Asn379, Asn517, Asn569, and Asn574.

The protein belongs to the INP2 family. In terms of assembly, interacts with MYO2.

Its subcellular location is the peroxisome membrane. Required for peroxisome inheritance. Acts as the peroxisome-specific receptor for the myosin V motor MYO2. The chain is Inheritance of peroxisomes protein 2 (INP2) from Saccharomyces cerevisiae (strain ATCC 204508 / S288c) (Baker's yeast).